The sequence spans 127 residues: Anti-adapter protein IraD (127 aa).

It belongs to the GpW/Gp25 family. IraD subfamily. In terms of assembly, interacts with RssB.

The protein resides in the cytoplasm. Functionally, inhibits RpoS proteolysis by regulating RssB activity, thereby increasing the stability of the sigma stress factor RpoS during oxidative stress. Its effect on RpoS stability is due to its interaction with RssB, which probably blocks the interaction of RssB with RpoS, and the consequent delivery of the RssB-RpoS complex to the ClpXP protein degradation pathway. This is Anti-adapter protein IraD from Escherichia coli (strain UTI89 / UPEC).